A 907-amino-acid chain; its full sequence is Schlafen family member 13 (907 aa).

Residues Met-1–Pro-353 form a n'-domain region region. Active-site residues include Glu-205 and Glu-210. Residues His-281, Cys-283, and Cys-318 each coordinate Zn(2+). Gly-604–Thr-611 lines the ATP pocket.

Belongs to the Schlafen family. Subgroup III subfamily. It depends on Mg(2+) as a cofactor.

The protein resides in the cytoplasm. Its function is as follows. Endoribonuclease that cleaves tRNAs and rRNAs. Cleaves tRNAs 11 nucleotides from the 3'-terminus at the acceptor stem. Does not act on tRNA(Sec). The polypeptide is Schlafen family member 13 (Rattus norvegicus (Rat)).